A 476-amino-acid chain; its full sequence is MLAVKVYNTLTRKKEEFKPLVPGQISMYVCGPTVYNYIHIGNARSSIAFDTIRRYLEYKGYKVKYVSNFTDVDDKMINEAHAEETTVPKLAEKFINAFLEDTTALNIEPATLHPRATHEIKEIIAFIQTLIDKGYAYESHGDVYYRAKKFKHYGELSDQNIERLEEGASEHINDEEQNRKEDPIDFALWKAQKEPDEIAWDSPWGKGRPGWHIECSVMSTKYLGDTIDIHGGGQDLEFPHHENEIAQSEAKTGKKFVNYWLHNGFVTVGKDQEKMSKSLHNFVTVHDILKEVDPQVLRFFMASVQYRRQINYSAENLQQAATILDRFKNTLVNINYRLEDDTPSKDSDELAKAIAKTNEKFEVAMDDDFNVQNALTAIYDLLPIVNANANAEKADKKSLKLFKDKLSAWLLVFGIDTEKLCSQSAGSNDEIDQLVKKRDEARKKKDWATSDQIRDQLKEMGITIQDTPQGTRWTRD.

Residue cysteine 30 participates in Zn(2+) binding. Positions 32-42 (PTVYNYIHIGN) match the 'HIGH' region motif. The Zn(2+) site is built by cysteine 215, histidine 240, and glutamate 244. Residues 274 to 278 (KMSKS) carry the 'KMSKS' region motif. Position 277 (lysine 277) interacts with ATP.

It belongs to the class-I aminoacyl-tRNA synthetase family. As to quaternary structure, monomer. It depends on Zn(2+) as a cofactor.

The protein resides in the cytoplasm. It catalyses the reaction tRNA(Cys) + L-cysteine + ATP = L-cysteinyl-tRNA(Cys) + AMP + diphosphate. In Lactobacillus helveticus (strain DPC 4571), this protein is Cysteine--tRNA ligase.